We begin with the raw amino-acid sequence, 431 residues long: GDP-L-galactose phosphorylase 2 (431 aa).

Residue histidine 235 is the Tele-GMP-histidine intermediate of the active site. Positions 398–407 (EEEEEEELEE) are enriched in acidic residues. A disordered region spans residues 398-417 (EEEEEEELEEQNSMNGGSFT).

The protein belongs to the GDPGP1 family. In terms of assembly, interacts with TLP1. In terms of tissue distribution, expressed in leaves, stems, roots, flowers and siliques.

The protein localises to the cytoplasm. Its subcellular location is the nucleus. The enzyme catalyses GDP-beta-L-galactose + phosphate = beta-L-galactose 1-phosphate + GDP + H(+). It functions in the pathway cofactor biosynthesis; L-ascorbate biosynthesis via GDP-alpha-D-mannose pathway; L-ascorbate from GDP-alpha-D-mannose: step 2/5. In terms of biological role, catalyzes a reaction of the Smirnoff-Wheeler pathway, the major route to ascorbate biosynthesis in plants. Acts as a phosphorylase rather than as a transferase. Uses preferentially GDP-L-galactose and GDP-D-glucose as substrates. Lower activity with GDP-L-fucose, very low activity with GDP-D-mannose, and no activity with UDP-D-glucose, UDP-D-galactose or ADP-D-glucose. Highly specific for inorganic phosphate as the guanylyl acceptor. The polypeptide is GDP-L-galactose phosphorylase 2 (VTC5) (Arabidopsis thaliana (Mouse-ear cress)).